The sequence spans 275 residues: Structure-specific endonuclease subunit SLX1 (275 aa).

Residues 12 to 95 enclose the GIY-YIG domain; sequence RFFGVYLLYC…QHPHASRRLA (84 aa). Over residues 148-161 the composition is skewed to pro residues; sequence HVPLAFGPPPPQAP. Residues 148–179 form a disordered region; it reads HVPLAFGPPPPQAPAPRRRAGPFDDAEPEPDQ. An SLX1-type zinc finger spans residues 186 to 238; the sequence is CSLCAQTIQDEEGPLCCPHPGCLLRAHVICLAEEFLQEEPGQLLPLEGQCPCC.

The protein belongs to the SLX1 family. Forms a heterodimer with SLX4. The cofactor is a divalent metal cation.

It is found in the nucleus. Its function is as follows. Catalytic subunit of the SLX1-SLX4 structure-specific endonuclease that resolves DNA secondary structures generated during DNA repair and recombination. Has endonuclease activity towards branched DNA substrates, introducing single-strand cuts in duplex DNA close to junctions with ss-DNA. Has a preference for 5'-flap structures, and promotes symmetrical cleavage of static and migrating Holliday junctions (HJs). Resolves HJs by generating two pairs of ligatable, nicked duplex products. The protein is Structure-specific endonuclease subunit SLX1 of Homo sapiens (Human).